The following is an 88-amino-acid chain: Small ribosomal subunit protein uS15 (88 aa).

It belongs to the universal ribosomal protein uS15 family. As to quaternary structure, part of the 30S ribosomal subunit. Forms a bridge to the 50S subunit in the 70S ribosome, contacting the 23S rRNA.

Functionally, one of the primary rRNA binding proteins, it binds directly to 16S rRNA where it helps nucleate assembly of the platform of the 30S subunit by binding and bridging several RNA helices of the 16S rRNA. Its function is as follows. Forms an intersubunit bridge (bridge B4) with the 23S rRNA of the 50S subunit in the ribosome. This chain is Small ribosomal subunit protein uS15, found in Geobacter metallireducens (strain ATCC 53774 / DSM 7210 / GS-15).